Reading from the N-terminus, the 35-residue chain is Photosystem II reaction center protein T (35 aa).

Residues 3–23 (ALVYTFLLVSTLGIIFFAIFF) traverse the membrane as a helical segment.

It belongs to the PsbT family. In terms of assembly, PSII is composed of 1 copy each of membrane proteins PsbA, PsbB, PsbC, PsbD, PsbE, PsbF, PsbH, PsbI, PsbJ, PsbK, PsbL, PsbM, PsbT, PsbY, PsbZ, Psb30/Ycf12, at least 3 peripheral proteins of the oxygen-evolving complex and a large number of cofactors. It forms dimeric complexes.

It localises to the plastid. The protein resides in the chloroplast thylakoid membrane. Functionally, found at the monomer-monomer interface of the photosystem II (PS II) dimer, plays a role in assembly and dimerization of PSII. PSII is a light-driven water plastoquinone oxidoreductase, using light energy to abstract electrons from H(2)O, generating a proton gradient subsequently used for ATP formation. In Gossypium barbadense (Sea Island cotton), this protein is Photosystem II reaction center protein T.